The sequence spans 435 residues: GTPase Der (435 aa).

EngA-type G domains follow at residues 4–167 and 175–350; these read GIVA…PSHE and TRVS…TALD. GTP contacts are provided by residues 10–17, 57–61, 119–122, 181–188, 228–232, and 293–296; these read GRPNVGKS, DTGGI, NKYD, DTAGI, and NKWD. A KH-like domain is found at 351 to 435; that stretch reads KKIKTSVFNE…PMSIIFRERK (85 aa).

It belongs to the TRAFAC class TrmE-Era-EngA-EngB-Septin-like GTPase superfamily. EngA (Der) GTPase family. In terms of assembly, associates with the 50S ribosomal subunit.

GTPase that plays an essential role in the late steps of ribosome biogenesis. The polypeptide is GTPase Der (Mesoplasma florum (strain ATCC 33453 / NBRC 100688 / NCTC 11704 / L1) (Acholeplasma florum)).